Here is a 159-residue protein sequence, read N- to C-terminus: ATP synthase subunit b (159 aa).

A helical transmembrane segment spans residues 4–24 (VGINGTLIVQLVTFVILVALL).

The protein belongs to the ATPase B chain family. In terms of assembly, F-type ATPases have 2 components, F(1) - the catalytic core - and F(0) - the membrane proton channel. F(1) has five subunits: alpha(3), beta(3), gamma(1), delta(1), epsilon(1). F(0) has three main subunits: a(1), b(2) and c(10-14). The alpha and beta chains form an alternating ring which encloses part of the gamma chain. F(1) is attached to F(0) by a central stalk formed by the gamma and epsilon chains, while a peripheral stalk is formed by the delta and b chains.

It is found in the cell inner membrane. In terms of biological role, f(1)F(0) ATP synthase produces ATP from ADP in the presence of a proton or sodium gradient. F-type ATPases consist of two structural domains, F(1) containing the extramembraneous catalytic core and F(0) containing the membrane proton channel, linked together by a central stalk and a peripheral stalk. During catalysis, ATP synthesis in the catalytic domain of F(1) is coupled via a rotary mechanism of the central stalk subunits to proton translocation. Component of the F(0) channel, it forms part of the peripheral stalk, linking F(1) to F(0). The chain is ATP synthase subunit b from Acidithiobacillus ferridurans.